The chain runs to 112 residues: uncharacterized protein (112 aa).

2 N-linked (GlcNAc...) asparagine; by host glycosylation sites follow: Asn-29 and Asn-60. A helical transmembrane segment spans residues 66 to 86 (IFNGLGFILIVIFIYLLLITL).

It belongs to the asfivirus B117L family.

The protein resides in the host membrane. Its subcellular location is the virion. This is an uncharacterized protein from African swine fever virus (isolate Tick/South Africa/Pretoriuskop Pr4/1996) (ASFV).